The sequence spans 487 residues: Putative B3 domain-containing protein At1g78640 (487 aa).

2 consecutive DNA-binding regions (TF-B3) follow at residues 171 to 269 (RLLL…QQGT) and 379 to 474 (RLTL…LFRV).

Its subcellular location is the nucleus. The sequence is that of Putative B3 domain-containing protein At1g78640 from Arabidopsis thaliana (Mouse-ear cress).